Here is a 252-residue protein sequence, read N- to C-terminus: Imidazole glycerol phosphate synthase subunit HisF (252 aa).

Catalysis depends on residues aspartate 11 and aspartate 130.

It belongs to the HisA/HisF family. Heterodimer of HisH and HisF.

Its subcellular location is the cytoplasm. The catalysed reaction is 5-[(5-phospho-1-deoxy-D-ribulos-1-ylimino)methylamino]-1-(5-phospho-beta-D-ribosyl)imidazole-4-carboxamide + L-glutamine = D-erythro-1-(imidazol-4-yl)glycerol 3-phosphate + 5-amino-1-(5-phospho-beta-D-ribosyl)imidazole-4-carboxamide + L-glutamate + H(+). Its pathway is amino-acid biosynthesis; L-histidine biosynthesis; L-histidine from 5-phospho-alpha-D-ribose 1-diphosphate: step 5/9. In terms of biological role, IGPS catalyzes the conversion of PRFAR and glutamine to IGP, AICAR and glutamate. The HisF subunit catalyzes the cyclization activity that produces IGP and AICAR from PRFAR using the ammonia provided by the HisH subunit. The sequence is that of Imidazole glycerol phosphate synthase subunit HisF from Lacticaseibacillus paracasei (strain ATCC 334 / BCRC 17002 / CCUG 31169 / CIP 107868 / KCTC 3260 / NRRL B-441) (Lactobacillus paracasei).